A 249-amino-acid chain; its full sequence is MRRFKCTIQYDGTDYSGYQVQPNGLTIQEVLEKTLGRMHKHPVKVIGSGRTDARVHAQGQVIHFDTELSIAPASMVKALNTLLPDDIRVRDCKEVASDFEARYDVVGKEYRYFVRRTENAFRRHQSVLIPYSLDVAQIRLGLAHLVGTHDFSSFCVAKTETDNRVRTIYEAELIEQGEELIFRFQGSGFLYNQIRIMVGTLLDVGRGRFAPDDIKRMLEAKDRNVAGVTAPPHGLYLWEVFYPESKKGI.

Asp-52 (nucleophile) is an active-site residue. Tyr-110 is a substrate binding site.

Belongs to the tRNA pseudouridine synthase TruA family. Homodimer.

The catalysed reaction is uridine(38/39/40) in tRNA = pseudouridine(38/39/40) in tRNA. Functionally, formation of pseudouridine at positions 38, 39 and 40 in the anticodon stem and loop of transfer RNAs. The sequence is that of tRNA pseudouridine synthase A from Exiguobacterium sibiricum (strain DSM 17290 / CCUG 55495 / CIP 109462 / JCM 13490 / 255-15).